We begin with the raw amino-acid sequence, 333 residues long: GTPase Obg (333 aa).

Positions 1–158 constitute an Obg domain; the sequence is MFIDSAKIYV…RNIDLELKLL (158 aa). The interval 121-143 is disordered; the sequence is HGGKGNQHFATPTNRAPRYSEPA. An OBG-type G domain is found at 159-323; that stretch reads ADIGLVGFPN…LKDVLWRIIQ (165 aa). Residues 165 to 172, 190 to 194, 212 to 215, 279 to 282, and 304 to 306 each bind GTP; these read GFPNAGKS, FTTLE, DIPG, SKMD, and SSV. Mg(2+) contacts are provided by Ser172 and Thr192.

The protein belongs to the TRAFAC class OBG-HflX-like GTPase superfamily. OBG GTPase family. As to quaternary structure, monomer. Requires Mg(2+) as cofactor.

The protein localises to the cytoplasm. An essential GTPase which binds GTP, GDP and possibly (p)ppGpp with moderate affinity, with high nucleotide exchange rates and a fairly low GTP hydrolysis rate. Plays a role in control of the cell cycle, stress response, ribosome biogenesis and in those bacteria that undergo differentiation, in morphogenesis control. The chain is GTPase Obg from Chloroherpeton thalassium (strain ATCC 35110 / GB-78).